The chain runs to 630 residues: Chaperone protein DnaK (630 aa).

Residue Thr-197 is modified to Phosphothreonine; by autocatalysis. The span at 604–618 (KNNESVKNNESVKNN) shows a compositional bias: polar residues. The tract at residues 604–630 (KNNESVKNNESVKNNESVKDVDFEEIK) is disordered. Residues 619–630 (ESVKDVDFEEIK) are compositionally biased toward basic and acidic residues.

Belongs to the heat shock protein 70 family.

Functionally, acts as a chaperone. The chain is Chaperone protein DnaK from Karelsulcia muelleri (strain GWSS) (Sulcia muelleri).